A 198-amino-acid polypeptide reads, in one-letter code: Ion-translocating oxidoreductase complex subunit B (198 aa).

The hydrophobic stretch occupies residues 1-28; it reads MIITTVYFILVAIAVLALIFGAILGFAS. Residues 34 to 92 form the 4Fe-4S domain; the sequence is EADPIVEKIDALLPQSQCGQCGYPGCKPYAEAIANGDDITKCIPGGQTVIVNIAELMGV. Residues cysteine 51, cysteine 54, cysteine 59, cysteine 75, cysteine 115, cysteine 118, cysteine 121, cysteine 125, cysteine 145, cysteine 148, cysteine 151, and cysteine 155 each coordinate [4Fe-4S] cluster. 4Fe-4S ferredoxin-type domains follow at residues 106-135 and 136-165; these read MVAF…GTNK and AMHT…MIKV.

The protein belongs to the 4Fe4S bacterial-type ferredoxin family. RnfB subfamily. As to quaternary structure, the complex is composed of six subunits: RnfA, RnfB, RnfC, RnfD, RnfE and RnfG. It depends on [4Fe-4S] cluster as a cofactor.

Its subcellular location is the cell inner membrane. Part of a membrane-bound complex that couples electron transfer with translocation of ions across the membrane. The protein is Ion-translocating oxidoreductase complex subunit B of Pasteurella multocida (strain Pm70).